Consider the following 222-residue polypeptide: Small ribosomal subunit protein uS7m (222 aa).

The protein belongs to the universal ribosomal protein uS7 family. As to quaternary structure, part of the small ribosomal subunit.

It is found in the mitochondrion. Its function is as follows. One of the primary rRNA binding proteins, it binds directly to 18S rRNA where it nucleates assembly of the head domain of the small subunit. The protein is Small ribosomal subunit protein uS7m (RPS7) of Prototheca wickerhamii.